Consider the following 465-residue polypeptide: Uronate isomerase (465 aa).

It belongs to the metallo-dependent hydrolases superfamily. Uronate isomerase family.

The enzyme catalyses D-glucuronate = D-fructuronate. The catalysed reaction is aldehydo-D-galacturonate = keto-D-tagaturonate. The protein operates within carbohydrate metabolism; pentose and glucuronate interconversion. The polypeptide is Uronate isomerase (Bacillus velezensis (strain DSM 23117 / BGSC 10A6 / LMG 26770 / FZB42) (Bacillus amyloliquefaciens subsp. plantarum)).